Consider the following 147-residue polypeptide: Hordoindoline-B2 (147 aa).

The signal sequence occupies residues 1-19 (MKTLFLLALLALVASTTSA). Positions 20–28 (QYSVGGGYN) are excised as a propeptide.

Post-translationally, five disulfide bonds are present. As to expression, found in endosperm and aleurone layer of developing kernels, but not in the embryo.

The protein localises to the membrane. It is found in the secreted. The protein resides in the extracellular space. Functionally, acts as a membranotoxin, probably through its antibacterial and antifungal activities, contributing to the defense mechanism of the plant against predators. Forms monovalent cation-selective ion channels in membranes. Contributes to grain texture and hardness. In Hordeum vulgare (Barley), this protein is Hordoindoline-B2 (HINB-2).